Here is a 56-residue protein sequence, read N- to C-terminus: MKRQKRDRLARALSKGYQAGMQGRSKEQCPYFAIDARSHWLGGWRQAMEDRPGLAK.

The protein belongs to the ribosome modulation factor family.

The protein localises to the cytoplasm. During stationary phase, converts 70S ribosomes to an inactive dimeric form (100S ribosomes). The polypeptide is Ribosome modulation factor (Proteus mirabilis (strain HI4320)).